A 776-amino-acid polypeptide reads, in one-letter code: Outer capsid protein VP4 (776 aa).

Residues 65-224 (LDGPYRPTTF…KCTEYINHGL (160 aa)) are spike head. A disulfide bridge links Cys203 with Cys216. A spike body and stalk (antigen domain) region spans residues 248–479 (AQVNEDIVVS…LISLVPSNDD (232 aa)). The segment at 308-310 (DGE) is DGE motif. The DGE motif; interaction with ITGA2/ITGB1 heterodimer signature appears at 308–310 (DGE). Cys318 and Cys380 form a disulfide bridge. A hydrophobic; possible role in virus entry into host cell region spans residues 389 to 409 (LPLGNYPVMTGGTVSLHPAGV). A YGL motif; interaction with ITGA4 motif is present at residues 448–450 (YGL). Positions 484–518 (IMNSVTVRQDLERQLGELRDEFNSLSQQIAMSQLI) form a coiled coil. Residues 510–776 (QQIAMSQLID…IENLIMQCRL (267 aa)) are spike foot. Residues 644–646 (KID) carry the KID motif; interaction with HSPA8 motif.

It belongs to the rotavirus VP4 family. As to quaternary structure, homotrimer. VP4 adopts a dimeric appearance above the capsid surface, while forming a trimeric base anchored inside the capsid layer. Only hints of the third molecule are observed above the capsid surface. It probably performs a series of molecular rearrangements during viral entry. Prior to trypsin cleavage, it is flexible. The priming trypsin cleavage triggers its rearrangement into rigid spikes with approximate two-fold symmetry of their protruding parts. After an unknown second triggering event, cleaved VP4 may undergo another rearrangement, in which two VP5* subunits fold back on themselves and join a third subunit to form a tightly associated trimer, shaped like a folded umbrella. Interacts with VP6. Interacts with VP7. Homotrimer. The trimer is coiled-coil stabilized by its C-terminus, however, its N-terminus, known as antigen domain or 'body', seems to be flexible allowing it to self-associate either as a dimer or a trimer. Proteolytic cleavage by trypsin results in activation of VP4 functions and greatly increases infectivity. The penetration into the host cell is dependent on trypsin treatment of VP4. It produces two peptides, VP5* and VP8* that remain associated with the virion. Cleavage of VP4 by trypsin probably occurs in vivo in the lumen of the intestine prior to infection of enterocytes. Trypsin seems to be incorporated into the three-layered viral particles but remains inactive as long as the viral outer capsid is intact and would only be activated upon the solubilization of the latter.

It is found in the virion. It localises to the host rough endoplasmic reticulum. The protein localises to the host cell membrane. Its subcellular location is the host cytoplasm. The protein resides in the host cytoskeleton. It is found in the host endoplasmic reticulum-Golgi intermediate compartment. Its function is as follows. Spike-forming protein that mediates virion attachment to the host epithelial cell receptors and plays a major role in cell penetration, determination of host range restriction and virulence. Rotavirus attachment and entry into the host cell probably involves multiple sequential contacts between the outer capsid proteins VP4 and VP7, and the cell receptors. It is subsequently lost, together with VP7, following virus entry into the host cell. Following entry into the host cell, low intracellular or intravesicular Ca(2+) concentration probably causes the calcium-stabilized VP7 trimers to dissociate from the virion. This step is probably necessary for the membrane-disrupting entry step and the release of VP4, which is locked onto the virion by VP7. During the virus exit from the host cell, VP4 seems to be required to target the newly formed virions to the host cell lipid rafts. In terms of biological role, forms the spike 'foot' and 'body' and acts as a membrane permeabilization protein that mediates release of viral particles from endosomal compartments into the cytoplasm. During entry, the part of VP5* that protrudes from the virus folds back on itself and reorganizes from a local dimer to a trimer. This reorganization may be linked to membrane penetration by exposing VP5* hydrophobic region. In integrin-dependent strains, VP5* targets the integrin heterodimer ITGA2/ITGB1 for cell attachment. Functionally, forms the head of the spikes and mediates the recognition of specific host cell surface glycans. It is the viral hemagglutinin and an important target of neutralizing antibodies. In sialic acid-dependent strains, VP8* binds to host cell sialic acid, most probably a ganglioside, providing the initial contact. In some other strains, VP8* mediates the attachment to histo-blood group antigens (HBGAs) for viral entry. This is Outer capsid protein VP4 from Rotavirus A (isolate RVA/Pig/Australia/CRW-8/1987/G3P9[7]) (RV-A).